The sequence spans 307 residues: Aspartate carbamoyltransferase catalytic subunit (307 aa).

The carbamoyl phosphate site is built by Arg-54 and Thr-55. Lys-83 provides a ligand contact to L-aspartate. Carbamoyl phosphate contacts are provided by Arg-104, His-132, and Gln-135. Residues Arg-165 and Arg-228 each coordinate L-aspartate. Residues Leu-267 and Pro-268 each coordinate carbamoyl phosphate.

The protein belongs to the aspartate/ornithine carbamoyltransferase superfamily. ATCase family. As to quaternary structure, heterododecamer (2C3:3R2) of six catalytic PyrB chains organized as two trimers (C3), and six regulatory PyrI chains organized as three dimers (R2).

It carries out the reaction carbamoyl phosphate + L-aspartate = N-carbamoyl-L-aspartate + phosphate + H(+). It participates in pyrimidine metabolism; UMP biosynthesis via de novo pathway; (S)-dihydroorotate from bicarbonate: step 2/3. Its function is as follows. Catalyzes the condensation of carbamoyl phosphate and aspartate to form carbamoyl aspartate and inorganic phosphate, the committed step in the de novo pyrimidine nucleotide biosynthesis pathway. The sequence is that of Aspartate carbamoyltransferase catalytic subunit from Clostridium botulinum (strain Alaska E43 / Type E3).